We begin with the raw amino-acid sequence, 442 residues long: Radical S-adenosyl methionine domain-containing protein 1, mitochondrial (442 aa).

The transit peptide at M1–A17 directs the protein to the mitochondrion. The Radical SAM core domain occupies E34 to R270. An S-adenosyl-L-methionine-binding site is contributed by Y43. The [4Fe-4S] cluster site is built by C49, C53, and C56. S-adenosyl-L-methionine is bound by residues G98, G99–T100, E131, Q158, R170, and D195.

It belongs to the anaerobic coproporphyrinogen-III oxidase family. HemW subfamily. [4Fe-4S] cluster is required as a cofactor.

It localises to the mitochondrion. Functionally, may be a heme chaperone, appears to bind heme. Homologous bacterial proteins do not have oxygen-independent coproporphyrinogen-III oxidase activity. Binds 1 [4Fe-4S] cluster. The cluster is coordinated with 3 cysteines and an exchangeable S-adenosyl-L-methionine. The chain is Radical S-adenosyl methionine domain-containing protein 1, mitochondrial (Rsad1) from Mus musculus (Mouse).